We begin with the raw amino-acid sequence, 389 residues long: Protein IQ-domain 26 (389 aa).

IQ domains are found at residues 106-134 (ERWAAVKIQSVFKGYLARKALRALKGLVK) and 135-157 (LQALVRGYLVRKRAAETLHSMQA). The tract at residues 137–151 (ALVRGYLVRKRAAET) is calmodulin-binding. The segment at 347 to 374 (SVSGVRMVQPQPQPQTQTQQQKRSPCSY) is disordered.

This sequence belongs to the IQD family. As to quaternary structure, binds to multiple calmodulin (CaM) in the presence of Ca(2+) and CaM-like proteins.

Its subcellular location is the cell membrane. The protein localises to the cytoplasm. It is found in the cytoskeleton. In terms of biological role, may be involved in cooperative interactions with calmodulins or calmodulin-like proteins. Recruits calmodulin proteins to microtubules, thus being a potential scaffold in cellular signaling and trafficking. May associate with nucleic acids and regulate gene expression at the transcriptional or post-transcriptional level. In Arabidopsis thaliana (Mouse-ear cress), this protein is Protein IQ-domain 26.